We begin with the raw amino-acid sequence, 417 residues long: D-amino acid dehydrogenase (417 aa).

3–17 (IIVLGAGVIGVTSAY) serves as a coordination point for FAD.

Belongs to the DadA oxidoreductase family. The cofactor is FAD.

It catalyses the reaction a D-alpha-amino acid + A + H2O = a 2-oxocarboxylate + AH2 + NH4(+). The protein operates within amino-acid degradation; D-alanine degradation; NH(3) and pyruvate from D-alanine: step 1/1. In terms of biological role, oxidative deamination of D-amino acids. The chain is D-amino acid dehydrogenase from Azorhizobium caulinodans (strain ATCC 43989 / DSM 5975 / JCM 20966 / LMG 6465 / NBRC 14845 / NCIMB 13405 / ORS 571).